Reading from the N-terminus, the 140-residue chain is Protein archease (140 aa).

3 residues coordinate Ca(2+): Asp-12, Asp-139, and Leu-140.

It belongs to the archease family.

Activates the tRNA-splicing ligase complex by facilitating the enzymatic turnover of catalytic subunit RtcB. Acts by promoting the guanylylation of RtcB, a key intermediate step in tRNA ligation. Can also alter the NTP specificity of RtcB such that ATP, dGTP or ITP is used efficiently. May also act as a chaperone or modulator of proteins involved in DNA or RNA processing. This chain is Protein archease, found in Methanothermobacter thermautotrophicus (strain ATCC 29096 / DSM 1053 / JCM 10044 / NBRC 100330 / Delta H) (Methanobacterium thermoautotrophicum).